The chain runs to 89 residues: Small ribosomal subunit protein uS15 (89 aa).

This sequence belongs to the universal ribosomal protein uS15 family. As to quaternary structure, part of the 30S ribosomal subunit. Forms a bridge to the 50S subunit in the 70S ribosome, contacting the 23S rRNA.

One of the primary rRNA binding proteins, it binds directly to 16S rRNA where it helps nucleate assembly of the platform of the 30S subunit by binding and bridging several RNA helices of the 16S rRNA. Its function is as follows. Forms an intersubunit bridge (bridge B4) with the 23S rRNA of the 50S subunit in the ribosome. The chain is Small ribosomal subunit protein uS15 from Hamiltonella defensa subsp. Acyrthosiphon pisum (strain 5AT).